A 440-amino-acid chain; its full sequence is tRNA(Ile)-lysidine synthase (440 aa).

25 to 30 (SGGVDS) provides a ligand contact to ATP.

The protein belongs to the tRNA(Ile)-lysidine synthase family.

The protein resides in the cytoplasm. The enzyme catalyses cytidine(34) in tRNA(Ile2) + L-lysine + ATP = lysidine(34) in tRNA(Ile2) + AMP + diphosphate + H(+). Functionally, ligates lysine onto the cytidine present at position 34 of the AUA codon-specific tRNA(Ile) that contains the anticodon CAU, in an ATP-dependent manner. Cytidine is converted to lysidine, thus changing the amino acid specificity of the tRNA from methionine to isoleucine. This is tRNA(Ile)-lysidine synthase from Vibrio cholerae serotype O1 (strain ATCC 39315 / El Tor Inaba N16961).